The chain runs to 427 residues: UDP-N-acetyl-D-mannosamine dehydrogenase (427 aa).

Tyrosine 19, isoleucine 20, aspartate 39, arginine 44, threonine 91, and threonine 130 together coordinate NAD(+). UDP-N-acetyl-alpha-D-mannosaminouronate contacts are provided by arginine 155, valine 156, lysine 207, asparagine 211, arginine 214, histidine 245, arginine 247, and glycine 258. Lysine 207 functions as the Proton donor/acceptor in the catalytic mechanism. Cysteine 261 functions as the Nucleophile in the catalytic mechanism. UDP-N-acetyl-alpha-D-mannosaminouronate-binding residues include tyrosine 318 and lysine 319. Arginine 326 is an NAD(+) binding site. Lysine 404 serves as a coordination point for UDP-N-acetyl-alpha-D-mannosaminouronate.

The protein belongs to the UDP-glucose/GDP-mannose dehydrogenase family. Homotetramer; probably dimer of dimers.

The enzyme catalyses UDP-N-acetyl-alpha-D-mannosamine + 2 NAD(+) + H2O = UDP-N-acetyl-alpha-D-mannosaminouronate + 2 NADH + 3 H(+). Catalyzes the four-electron oxidation of UDP-N-acetyl-D-mannosamine (UDP-ManNAc), reducing NAD(+) and releasing UDP-N-acetylmannosaminuronic acid (UDP-ManNAcA). Cannot use NADP instead of NAD. In Methanococcus maripaludis (strain DSM 14266 / JCM 13030 / NBRC 101832 / S2 / LL), this protein is UDP-N-acetyl-D-mannosamine dehydrogenase (wecC).